Here is a 1065-residue protein sequence, read N- to C-terminus: Leucine-rich repeats and immunoglobulin-like domains protein 2 (1065 aa).

Residues 1-40 (MAPAPLGVPEEQLLGCRSRVLSRLLFIAQTALLLLPAAGA) form the signal peptide. Positions 41–75 (GLCPAPCSCRIPLLDCSRRKLPAPSWRALSGLLPP) constitute an LRRNT domain. Residues 41 to 807 (GLCPAPCSCR…HEDDGWTTVG (767 aa)) are Extracellular-facing. 15 LRR repeats span residues 76–97 (DTAI…LESQ), 98–119 (TLQE…GEPT), 121–142 (NITL…ALQF), 145–166 (ALES…SFPR), 168–189 (QLKY…CFDN), 193–214 (SLLV…IFKL), 216–237 (HLQF…TFQG), 240–261 (SLRS…AFFG), 264–285 (NMEE…WLYG), 288–309 (MLQQ…AWEF), 312–333 (RLSE…AFVG), 336–357 (LLER…VFRF), 360–382 (NLQT…SEAF), 387–408 (SLTK…AFIG), and 411–432 (SLEH…AFSQ). N-linked (GlcNAc...) asparagine glycosylation is present at Asn-91. Asn-121 carries N-linked (GlcNAc...) asparagine glycosylation. Asn-173 and Asn-189 each carry an N-linked (GlcNAc...) asparagine glycan. N-linked (GlcNAc...) asparagine glycosylation is present at Asn-274. N-linked (GlcNAc...) asparagine glycans are attached at residues Asn-441, Asn-468, Asn-514, Asn-571, and Asn-589. An LRRCT domain is found at 443 to 494 (SSLLCDCHLKWLLQWLVDNNFQHSVNVSCAHPEWLAGQSILNVDLKDFVCDD). Ig-like C2-type domains are found at residues 498-597 (PQIR…AKLT), 602-691 (PSFL…ASLT), and 696-785 (PSFI…NVIS). Cys-519 and Cys-580 form a disulfide bridge. A disulfide bridge connects residues Cys-623 and Cys-675. Asn-687 and Asn-728 each carry an N-linked (GlcNAc...) asparagine glycan. Cys-717 and Cys-766 are disulfide-bonded. The chain crosses the membrane as a helical span at residues 808–828 (IVIIVVVCCVVGTSLIWVIVI). Topologically, residues 829–1065 (YHMRRKNEDY…RNIQDGSEGT (237 aa)) are cytoplasmic. Position 906 is a phosphotyrosine (Tyr-906). Disordered stretches follow at residues 963 to 990 (SANR…QMSG) and 1003 to 1040 (ELGL…ASSM). The span at 974 to 983 (NHERISEKKL) shows a compositional bias: basic and acidic residues. Positions 1013–1024 (QQPVHESPQLHQ) are enriched in polar residues.

In terms of tissue distribution, detected in all tissues analyzed.

It localises to the cell membrane. The protein localises to the cytoplasm. This chain is Leucine-rich repeats and immunoglobulin-like domains protein 2 (LRIG2), found in Homo sapiens (Human).